Here is a 486-residue protein sequence, read N- to C-terminus: Ribulose bisphosphate carboxylase large chain 1 (486 aa).

Substrate is bound by residues Asn125 and Thr175. Lys177 acts as the Proton acceptor in catalysis. A substrate-binding site is contributed by Lys179. The Mg(2+) site is built by Lys203, Asp205, and Glu206. Lys203 bears the N6-carboxylysine mark. The Proton acceptor role is filled by His295. Positions 296, 328, and 380 each coordinate substrate.

It belongs to the RuBisCO large chain family. Type I subfamily. As to quaternary structure, heterohexadecamer of 8 large chains and 8 small chains. Mg(2+) serves as cofactor.

The catalysed reaction is 2 (2R)-3-phosphoglycerate + 2 H(+) = D-ribulose 1,5-bisphosphate + CO2 + H2O. The enzyme catalyses D-ribulose 1,5-bisphosphate + O2 = 2-phosphoglycolate + (2R)-3-phosphoglycerate + 2 H(+). RuBisCO catalyzes two reactions: the carboxylation of D-ribulose 1,5-bisphosphate, the primary event in carbon dioxide fixation, as well as the oxidative fragmentation of the pentose substrate. Both reactions occur simultaneously and in competition at the same active site. This Cereibacter sphaeroides (strain ATCC 17025 / ATH 2.4.3) (Rhodobacter sphaeroides) protein is Ribulose bisphosphate carboxylase large chain 1.